The chain runs to 206 residues: FMN-dependent NADH:quinone oxidoreductase (206 aa).

Residues serine 9, 15–17 (SVS), 95–98 (MYNF), and 139–142 (SRGG) each bind FMN.

The protein belongs to the azoreductase type 1 family. In terms of assembly, homodimer. FMN is required as a cofactor.

The catalysed reaction is 2 a quinone + NADH + H(+) = 2 a 1,4-benzosemiquinone + NAD(+). The enzyme catalyses N,N-dimethyl-1,4-phenylenediamine + anthranilate + 2 NAD(+) = 2-(4-dimethylaminophenyl)diazenylbenzoate + 2 NADH + 2 H(+). Its function is as follows. Quinone reductase that provides resistance to thiol-specific stress caused by electrophilic quinones. In terms of biological role, also exhibits azoreductase activity. Catalyzes the reductive cleavage of the azo bond in aromatic azo compounds to the corresponding amines. This chain is FMN-dependent NADH:quinone oxidoreductase, found in Legionella pneumophila subsp. pneumophila (strain Philadelphia 1 / ATCC 33152 / DSM 7513).